The primary structure comprises 94 residues: Ferredoxin-like protein (94 aa).

2 consecutive 4Fe-4S ferredoxin-type domains span residues 20–52 and 53–83; these read PHIRIKDPDHCTELSEKQCTVCCPAGCYTRETN and GKVTLVTDGCLECGTCRIICQDSGNLEWEWP.

To ferredoxins from P.putida and C.tartarivorum, ferredoxin I from A.vinelandii, ferredoxin II from D.desulfuricans.

Its function is as follows. Could be a 3Fe-4S cluster-containing protein. This is Ferredoxin-like protein (fixX) from Azotobacter vinelandii.